Consider the following 923-residue polypeptide: Alanine--tRNA ligase (923 aa).

His-611, His-615, Cys-714, and His-718 together coordinate Zn(2+).

Belongs to the class-II aminoacyl-tRNA synthetase family. Zn(2+) serves as cofactor.

The protein resides in the cytoplasm. It carries out the reaction tRNA(Ala) + L-alanine + ATP = L-alanyl-tRNA(Ala) + AMP + diphosphate. Its function is as follows. Catalyzes the attachment of alanine to tRNA(Ala) in a two-step reaction: alanine is first activated by ATP to form Ala-AMP and then transferred to the acceptor end of tRNA(Ala). Also edits incorrectly charged Ser-tRNA(Ala) and Gly-tRNA(Ala) via its editing domain. This chain is Alanine--tRNA ligase, found in Methanosarcina barkeri (strain Fusaro / DSM 804).